Reading from the N-terminus, the 340-residue chain is Proline-rich transmembrane protein 2 (340 aa).

The segment at 1–261 is disordered; it reads MAASSSEISE…AGPGVEGGEG (261 aa). Over 1–268 the chain is Cytoplasmic; that stretch reads MAASSSEISE…GEGTQKPRDY (268 aa). Over residues 9 to 18 the composition is skewed to basic and acidic residues; that stretch reads SEMKGVEESP. At serine 28 the chain carries Phosphoserine. The residue at position 74 (threonine 74) is a Phosphothreonine. 2 stretches are compositionally biased toward pro residues: residues 131-155 and 197-207; these read PPEP…PKPA and APEPHSPPSKK. Serine 238 is subject to Phosphoserine. An Omega-N-methylarginine modification is found at arginine 240. 2 positions are modified to phosphoserine: serine 248 and serine 249. The segment at residues 269–289 is an intramembrane region (helical); sequence IILAILSCFCPMWPVNIVAFA. The Cytoplasmic portion of the chain corresponds to 290 to 317; the sequence is YAVMSRNSLQQGDVDGAQRLGRVAKLLS. The chain crosses the membrane as a helical span at residues 318–338; the sequence is IVALVGGVLIIIASCVINLGV. Topologically, residues 339 to 340 are extracellular; that stretch reads YK.

This sequence belongs to the CD225/Dispanin family. As to quaternary structure, component of the outer core of AMPAR complex. AMPAR complex consists of an inner core made of 4 pore-forming GluA/GRIA proteins (GRIA1, GRIA2, GRIA3 and GRIA4) and 4 major auxiliary subunits arranged in a twofold symmetry. One of the two pairs of distinct binding sites is occupied either by CNIH2, CNIH3 or CACNG2, CACNG3. The other harbors CACNG2, CACNG3, CACNG4, CACNG8 or GSG1L. This inner core of AMPAR complex is complemented by outer core constituents binding directly to the GluA/GRIA proteins at sites distinct from the interaction sites of the inner core constituents. Outer core constituents include at least PRRT1, PRRT2, CKAMP44/SHISA9, FRRS1L and NRN1. The proteins of the inner and outer core serve as a platform for other, more peripherally associated AMPAR constituents. Alone or in combination, these auxiliary subunits control the gating and pharmacology of the AMPAR complex and profoundly impact their biogenesis and protein processing. Interacts with intersectin 1/ITSN1. Interacts with SNARE complex components, including SNAP25, STX1A, SYT1 and SYT2; this interaction may inhibit SNARE complex formation.

The protein localises to the cell membrane. It localises to the presynaptic cell membrane. It is found in the synapse. Its subcellular location is the cell projection. The protein resides in the axon. The protein localises to the cytoplasmic vesicle. It localises to the secretory vesicle. It is found in the synaptic vesicle membrane. Its subcellular location is the postsynaptic density membrane. The protein resides in the dendritic spine. As a component of the outer core of AMPAR complex, may be involved in synaptic transmission in the central nervous system. In hippocampal neurons, in presynaptic terminals, plays an important role in the final steps of neurotransmitter release, possibly by regulating Ca(2+)-sensing. In the cerebellum, may inhibit SNARE complex formation and down-regulate short-term facilitation. This chain is Proline-rich transmembrane protein 2 (PRRT2), found in Homo sapiens (Human).